The following is a 328-amino-acid chain: Cytochrome c biogenesis protein CcsA (328 aa).

The next 8 helical transmembrane spans lie at 15-35 (FLVLFLTMLVYWAGAAFPSIP), 36-56 (LLPGLGSTGVAIANLCIAALL), 68-88 (ISNLYESLFFLAWGVTAVHLI), 97-117 (LVGVVTTPVAMGITAFATLSL), 142-162 (VMMLSYAALMVGSLMAIAFLI), 236-256 (VIGLGFPLLTIGIIAGAVWAN), 263-283 (WSWDPKETWALITWLVFAAYL), and 297-317 (AILAASGFVVVWVCYLGVNLL).

Belongs to the CcmF/CycK/Ccl1/NrfE/CcsA family. As to quaternary structure, may interact with ccs1.

It is found in the cellular thylakoid membrane. In terms of biological role, required during biogenesis of c-type cytochromes (cytochrome c6 and cytochrome f) at the step of heme attachment. The sequence is that of Cytochrome c biogenesis protein CcsA from Microcystis aeruginosa (strain NIES-843 / IAM M-2473).